A 285-amino-acid chain; its full sequence is Protein pxr1 (285 aa).

Positions 1 to 11 are enriched in basic residues; sequence MGLAAPRKKIK. A disordered region spans residues 1-23; that stretch reads MGLAAPRKKIKISHDPNNTNWSR. One can recognise a G-patch domain in the interval 25–79; sequence TSGFGHKILSSQGWTPGSFLGARNAAHAEMFTAASASHIKVVLKDDTLGLGARPK. The disordered stretch occupies residues 144–263; sequence TPIVTEEPQG…MGRHVFRGRH (120 aa). Residues 152–163 are compositionally biased toward basic and acidic residues; that stretch reads QGIHKDKQEDKL. Residues 190-208 show a composition bias toward basic residues; that stretch reads KKKKSKSKNHREKKDRKRK. Positions 224 to 234 are enriched in basic and acidic residues; the sequence is RSTEKKSKATR. Over residues 254-263 the composition is skewed to basic residues; that stretch reads MGRHVFRGRH.

This sequence belongs to the PINX1 family.

The protein resides in the nucleus. Its subcellular location is the nucleolus. Its function is as follows. Involved in rRNA-processing at A0, A1 and A2 sites and negatively regulates telomerase. In Aspergillus niger (strain ATCC MYA-4892 / CBS 513.88 / FGSC A1513), this protein is Protein pxr1 (pxr1).